We begin with the raw amino-acid sequence, 875 residues long: Protein TraC (875 aa).

The protein resides in the cell inner membrane. In terms of biological role, required for the assembly of mature F-pilin subunits into extended F pili. The protein is Protein TraC (traC) of Escherichia coli (strain K12).